The following is a 159-amino-acid chain: MSKKNTADNHIVTNKKVFHDYFLEEHFEAGIALEGWEVKAVRAGRIQIKESYILVKDQQVYLFGALIHPLASASSHIFPEAQRTRKLLLHRYQIAKLIGASERDGYTLMPVSLYWKNGFVKVDVAIAKGKKEFDKRQVKKDQDWKKTQSRIMKAHKRQL.

This sequence belongs to the SmpB family.

The protein resides in the cytoplasm. Required for rescue of stalled ribosomes mediated by trans-translation. Binds to transfer-messenger RNA (tmRNA), required for stable association of tmRNA with ribosomes. tmRNA and SmpB together mimic tRNA shape, replacing the anticodon stem-loop with SmpB. tmRNA is encoded by the ssrA gene; the 2 termini fold to resemble tRNA(Ala) and it encodes a 'tag peptide', a short internal open reading frame. During trans-translation Ala-aminoacylated tmRNA acts like a tRNA, entering the A-site of stalled ribosomes, displacing the stalled mRNA. The ribosome then switches to translate the ORF on the tmRNA; the nascent peptide is terminated with the 'tag peptide' encoded by the tmRNA and targeted for degradation. The ribosome is freed to recommence translation, which seems to be the essential function of trans-translation. The protein is SsrA-binding protein of Dichelobacter nodosus (strain VCS1703A).